The sequence spans 103 residues: Integration host factor subunit alpha (103 aa).

The interval Cys55 to Ile74 is disordered.

It belongs to the bacterial histone-like protein family. In terms of assembly, heterodimer of an alpha and a beta chain.

Its function is as follows. This protein is one of the two subunits of integration host factor, a specific DNA-binding protein that functions in genetic recombination as well as in transcriptional and translational control. This chain is Integration host factor subunit alpha, found in Thiobacillus denitrificans (strain ATCC 25259 / T1).